The chain runs to 78 residues: Small ribosomal subunit protein bS16c (78 aa).

This sequence belongs to the bacterial ribosomal protein bS16 family.

The protein resides in the plastid. The protein localises to the chloroplast. This Panax ginseng (Korean ginseng) protein is Small ribosomal subunit protein bS16c.